The sequence spans 150 residues: Large ribosomal subunit protein bL9 (150 aa).

This sequence belongs to the bacterial ribosomal protein bL9 family.

Functionally, binds to the 23S rRNA. The chain is Large ribosomal subunit protein bL9 from Erwinia tasmaniensis (strain DSM 17950 / CFBP 7177 / CIP 109463 / NCPPB 4357 / Et1/99).